The following is a 318-amino-acid chain: Homoserine kinase (318 aa).

97–107 (PIGSGLGSSAC) serves as a coordination point for ATP.

This sequence belongs to the GHMP kinase family. Homoserine kinase subfamily.

The protein resides in the cytoplasm. It carries out the reaction L-homoserine + ATP = O-phospho-L-homoserine + ADP + H(+). It functions in the pathway amino-acid biosynthesis; L-threonine biosynthesis; L-threonine from L-aspartate: step 4/5. In terms of biological role, catalyzes the ATP-dependent phosphorylation of L-homoserine to L-homoserine phosphate. The polypeptide is Homoserine kinase (Aliivibrio fischeri (strain MJ11) (Vibrio fischeri)).